The following is a 599-amino-acid chain: UvrABC system protein C (599 aa).

The GIY-YIG domain occupies 19-95 (ESTGVYIFYD…IKKYRPIMNV (77 aa)). The 36-residue stretch at 206–241 (EEIIEKLYDQMQEYSKNLEFEKAAKIRDKIRLLQNL) folds into the UVR domain.

The protein belongs to the UvrC family. Interacts with UvrB in an incision complex.

Its subcellular location is the cytoplasm. In terms of biological role, the UvrABC repair system catalyzes the recognition and processing of DNA lesions. UvrC both incises the 5' and 3' sides of the lesion. The N-terminal half is responsible for the 3' incision and the C-terminal half is responsible for the 5' incision. This is UvrABC system protein C from Dictyoglomus thermophilum (strain ATCC 35947 / DSM 3960 / H-6-12).